A 225-amino-acid chain; its full sequence is Histone-arginine methyltransferase METTL23 (225 aa).

It belongs to the methyltransferase superfamily. METTL23 family. In terms of assembly, interacts with HSPA5, HSP90B1, TUBULIN, UGGT1 and UGGT2. Interacts with TET3. Interacts with STPG4.

Its subcellular location is the nucleus. The protein resides in the cytoplasm. The catalysed reaction is L-arginyl-[protein] + 2 S-adenosyl-L-methionine = N(omega),N(omega)-dimethyl-L-arginyl-[protein] + 2 S-adenosyl-L-homocysteine + 2 H(+). In terms of biological role, histone methyltransferase that dimethylates histone H3 at 'Arg-17', forming asymmetric dimethylarginine (H3R17me2a), leading to activate transcription via chromatin remodeling. Maternal factor involved in epigenetic chromatin reprogramming of the paternal genome in the zygote: mediates H3R17me2a, promoting histone H3.3 incorporation in the male pronucleus, leading to TET3 recruitment and subsequent DNA demethylation. The sequence is that of Histone-arginine methyltransferase METTL23 from Rattus norvegicus (Rat).